The following is a 372-amino-acid chain: Cytochrome b (372 aa).

Transmembrane regions (helical) follow at residues 25 to 45 (FGSM…FLAI), 69 to 90 (WIMQ…YIHI), 105 to 125 (WLSG…GYVL), and 170 to 190 (FFAL…IHII). His-75 and His-89 together coordinate heme b. His-174 and His-188 together coordinate heme b. Residue His-193 coordinates a ubiquinone. Transmembrane regions (helical) follow at residues 218 to 238 (YKDM…LSFS), 280 to 300 (LGGT…PFTH), 312 to 332 (LTQT…WTAT), and 339 to 358 (FISI…IINP).

This sequence belongs to the cytochrome b family. In terms of assembly, the cytochrome bc1 complex contains 3 respiratory subunits (MT-CYB, CYC1 and UQCRFS1), 2 core proteins (UQCRC1 and UQCRC2) and probably 6 low-molecular weight proteins. It depends on heme b as a cofactor.

It localises to the mitochondrion inner membrane. In terms of biological role, component of the ubiquinol-cytochrome c reductase complex (complex III or cytochrome b-c1 complex) that is part of the mitochondrial respiratory chain. The b-c1 complex mediates electron transfer from ubiquinol to cytochrome c. Contributes to the generation of a proton gradient across the mitochondrial membrane that is then used for ATP synthesis. The chain is Cytochrome b (MT-CYB) from Dendroaspis polylepis polylepis (Black mamba).